Consider the following 146-residue polypeptide: Large ribosomal subunit protein uL15 (146 aa).

Residues 1-13 (MKLHELKPAEGSR) are compositionally biased toward basic and acidic residues. The disordered stretch occupies residues 1 to 52 (MKLHELKPAEGSRKVRNRVGRGIGSGNGKTAGKGHKGQNARSGGGVRLGFEG). 2 stretches are compositionally biased toward gly residues: residues 21 to 31 (RGIGSGNGKTA) and 42 to 52 (SGGGVRLGFEG).

Belongs to the universal ribosomal protein uL15 family. As to quaternary structure, part of the 50S ribosomal subunit.

In terms of biological role, binds to the 23S rRNA. This chain is Large ribosomal subunit protein uL15, found in Bacillus anthracis (strain A0248).